The chain runs to 447 residues: MKSPNETSFTNHTLENASTFGADLSIESNESLVSLDEYLSNTLPLHLQQLFLENLQKRQQGILESASDSIIEAVRDSSQQKFQNGLHLSLDSGVGSKGSVFSAWSFAQGLVIGQLSVIVVLIFFIKFFIFSEGPIKTEGPKGGKSGPKRDSAYVSPLLSTSTSHFLSSIIKRGESDGADSSENTDTDRKFSQINTILEKTYYNVETHSPETLDWFNVLIGQTIQQFREEALQKDNIVHSLNNFIARKSGELPQYLDTIKITELDIGEDFPILSNCRIQYSPNSNKQRLEAKIDIDLSDRLALGIETKLLVNYPKPFTAALPIQLTVSIVRFQACLTVSLTTAEEFVPTSENEASYGSENGGYFLMFSFSPEYRMEFDVKSLIGARSKLQDIPKIGSLIESQIKKWFVERCVEPRFQFIKLPSLWPRSKNTREEKTENDDISMKSTDL.

The Lumenal portion of the chain corresponds to 1–109 (MKSPNETSFT…VFSAWSFAQG (109 aa)). The chain crosses the membrane as a helical span at residues 110 to 130 (LVIGQLSVIVVLIFFIKFFIF). Residues 131 to 447 (SEGPIKTEGP…DDISMKSTDL (317 aa)) are Cytoplasmic-facing. Residues 208–421 (SPETLDWFNV…EPRFQFIKLP (214 aa)) enclose the SMP-LTD domain.

The protein belongs to the MMM1 family. In terms of assembly, homodimer. Component of the ER-mitochondria encounter structure (ERMES) or MDM complex, composed of MMM1, MDM10, MDM12 and MDM34. An MMM1 homodimer associates with one molecule of MDM12 on each side in a pairwise head-to-tail manner, and the SMP-LTD domains of MMM1 and MDM12 generate a continuous hydrophobic tunnel for phospholipid trafficking.

Its subcellular location is the endoplasmic reticulum membrane. Functionally, component of the ERMES/MDM complex, which serves as a molecular tether to connect the endoplasmic reticulum (ER) and mitochondria. Components of this complex are involved in the control of mitochondrial shape and protein biogenesis, and function in nonvesicular lipid trafficking between the ER and mitochondria. The MDM12-MMM1 subcomplex functions in the major beta-barrel assembly pathway that is responsible for biogenesis of all outer membrane beta-barrel proteins, and acts in a late step after the SAM complex. The MDM10-MDM12-MMM1 subcomplex further acts in the TOM40-specific pathway after the action of the MDM12-MMM1 complex. Essential for establishing and maintaining the structure of mitochondria and maintenance of mtDNA nucleoids. In Lachancea thermotolerans (strain ATCC 56472 / CBS 6340 / NRRL Y-8284) (Yeast), this protein is Maintenance of mitochondrial morphology protein 1.